Consider the following 1210-residue polypeptide: Adenine-specific methyltransferase PglX (1210 aa).

Basic and acidic residues predominate over residues Lys1181–Gly1194. The segment at Lys1181 to Gln1210 is disordered. Residues Thr1201–Gln1210 are compositionally biased toward basic residues.

It belongs to the methyltransferase superfamily. PglX adenine methyltransferase family.

It catalyses the reaction a 2'-deoxyadenosine in DNA + S-adenosyl-L-methionine = an N(6)-methyl-2'-deoxyadenosine in DNA + S-adenosyl-L-homocysteine + H(+). Its function is as follows. BREX systems (bacteriophage exclusion) provide immunity against bacteriophage. Part of a type 2 BREX system. Probably a DNA methyltransferase, it methylates phage DNA in vitro in an S-adenosyl-L-methionine-dependent manner. Previously called the phage growth limitation (Pgl) system, it confers protection against bacteriophage phiC31. The bacteria allows one cycle of phage infection, but subsequent cycles are impaired, protecting the original bacterial colony. The system undergoes high rates (10(-3) to 10(-4)) of phase reversion, i.e. loss and regain of phiC31 resistance. When the pglW-pglX-pglY-pglZ genes are transformed into a susceptible S.lividans (strain 1326) they confer resistance to infection by phage phiC31 and phiBT1; all 4 genes are necessary. Probably a toxic component of a type II toxin-antitoxin (TA) system. The toxic activity is inhibited by its cognate antitoxin PglZ. Functionally, may be a subtypes G and alpha restriction enzyme that recognizes and cleaves an unknown sequence. Methylates an adenine residue in the same sequence. The chain is Adenine-specific methyltransferase PglX from Streptomyces coelicolor (strain ATCC BAA-471 / A3(2) / M145).